A 199-amino-acid chain; its full sequence is TATA-box-binding protein (199 aa).

2 tandem repeats follow at residues 10 to 86 and 101 to 177.

It belongs to the TBP family.

Functionally, general factor that plays a role in the activation of archaeal genes transcribed by RNA polymerase. Binds specifically to the TATA box promoter element which lies close to the position of transcription initiation. The sequence is that of TATA-box-binding protein from Pyrobaculum calidifontis (strain DSM 21063 / JCM 11548 / VA1).